Here is a 355-residue protein sequence, read N- to C-terminus: MLKDKLQPFINRFEEINQLLMSSEITSDIKRMTDLSKEQSSIQPIVSKAKEYIKVLEDIEENKLMLDDPELGDLAKEELKELETRKPELEEEIKVLMIPKDPNDDRNIYLELRAGTGGDEAAIFVGDLFRAYLRYAENNGWKVEIMSSSDSESGGYKEIVILVKGDHVYSKLKFEGGTHRVQRVPATESQGRVHTSAITVAVMPEVDDVEIEINENDLKIDVMRASGNGGQSVNTTDSAVRITHIPSGIVVTNQDQKSQHKNKDRALKVLKAKLYEIEMEKKMEAEGATRKEQVGTGDRSGRIRTYNYPQNRISDHRINLTLYRLDYIMNDGLFGEVIDPLIADHQSKLIEANGL.

Gln-231 is subject to N5-methylglutamine.

Belongs to the prokaryotic/mitochondrial release factor family. Post-translationally, methylated by PrmC. Methylation increases the termination efficiency of RF1.

Its subcellular location is the cytoplasm. In terms of biological role, peptide chain release factor 1 directs the termination of translation in response to the peptide chain termination codons UAG and UAA. The polypeptide is Peptide chain release factor 1 (Aliarcobacter butzleri (strain RM4018) (Arcobacter butzleri)).